The chain runs to 381 residues: tRNA-specific 2-thiouridylase MnmA (381 aa).

ATP is bound by residues 26-33 (AMSGGVDS) and L52. C120 (nucleophile) is an active-site residue. C120 and C217 are disulfide-bonded. ATP is bound at residue G144. Residues 166–168 (RDQ) are interaction with tRNA. The active-site Cysteine persulfide intermediate is C217.

This sequence belongs to the MnmA/TRMU family.

It localises to the cytoplasm. The catalysed reaction is S-sulfanyl-L-cysteinyl-[protein] + uridine(34) in tRNA + AH2 + ATP = 2-thiouridine(34) in tRNA + L-cysteinyl-[protein] + A + AMP + diphosphate + H(+). In terms of biological role, catalyzes the 2-thiolation of uridine at the wobble position (U34) of tRNA, leading to the formation of s(2)U34. In Ruegeria sp. (strain TM1040) (Silicibacter sp.), this protein is tRNA-specific 2-thiouridylase MnmA.